A 102-amino-acid chain; its full sequence is Spexin prohormone 1 (102 aa).

Residues 1 to 26 form the signal peptide; that stretch reads MKDLRTLAAYALALLLLATFVSHSWS. Residues 27-35 constitute a propeptide that is removed on maturation; that stretch reads APKGSFQRR. Glutamine amide is present on Gln-49. Positions 50-102 are excised as a propeptide; sequence GRRFVSEDRNEGDLYDTIRLESRSQNTENLSISKAAAFLLNILQQARDEDEPY.

This sequence belongs to the spexin family. Mainly expressed in the brain and ovary. Detected bilaterally in the adult brainstem. Expressed in neurons in the dorsal habenula (dHb). In the dHb some neurons project into the interpeduncular nucleus (IPN) where expression often overlaps with galr2a and galr2b. Weakly expressed in the liver, intestine, kidney, heart and gill.

Its subcellular location is the secreted. It localises to the extracellular space. The protein localises to the cytoplasmic vesicle. The protein resides in the secretory vesicle. Its function is as follows. Plays a role in the regulation of food intake and energy metabolism. May also be involved in suppressing the anxiety response by promoting the expression of serotonin-related genes such as fev, tph2 and slc6a4a. In terms of biological role, acts as a ligand for galanin receptors galr2a and galr2b. Brain administration of the peptide inhibits food consumption and elevates levels of glucose, triacylglycerol and cholesterol in the serum. Likely to control food intake by regulating appetite related genes which includes the negative regulation of the orexigenic factor agrp. By controlling food intake it may act as a satiety factor in energy metabolism. The sequence is that of Spexin prohormone 1 (spx) from Danio rerio (Zebrafish).